A 147-amino-acid chain; its full sequence is MRTYTPKPGDVQRQWHVIDATDVVLGRLASQTATLLRGKHKPTFAPHVDTGDFVIIINAEKVALTGSKLQKKRAYRHSGYPGGLKSTSYAELLEKNPTRAVEKAIKGMLPKNKLAAQQLSKLKVYAGAEHPHQAQQPKPYEFTQVAQ.

It belongs to the universal ribosomal protein uL13 family. Part of the 50S ribosomal subunit.

In terms of biological role, this protein is one of the early assembly proteins of the 50S ribosomal subunit, although it is not seen to bind rRNA by itself. It is important during the early stages of 50S assembly. The chain is Large ribosomal subunit protein uL13 from Kocuria rhizophila (strain ATCC 9341 / DSM 348 / NBRC 103217 / DC2201).